The primary structure comprises 294 residues: tRNA-cytidine(32) 2-sulfurtransferase (294 aa).

Residues 70–75 (SGGKDS) carry the PP-loop motif motif. Positions 145, 148, and 236 each coordinate [4Fe-4S] cluster.

The protein belongs to the TtcA family. As to quaternary structure, homodimer. The cofactor is Mg(2+). [4Fe-4S] cluster serves as cofactor.

Its subcellular location is the cytoplasm. It carries out the reaction cytidine(32) in tRNA + S-sulfanyl-L-cysteinyl-[cysteine desulfurase] + AH2 + ATP = 2-thiocytidine(32) in tRNA + L-cysteinyl-[cysteine desulfurase] + A + AMP + diphosphate + H(+). Its pathway is tRNA modification. Catalyzes the ATP-dependent 2-thiolation of cytidine in position 32 of tRNA, to form 2-thiocytidine (s(2)C32). The sulfur atoms are provided by the cysteine/cysteine desulfurase (IscS) system. This is tRNA-cytidine(32) 2-sulfurtransferase from Rhizobium meliloti (strain 1021) (Ensifer meliloti).